A 202-amino-acid chain; its full sequence is Probable nicotinate-nucleotide adenylyltransferase (202 aa).

It belongs to the NadD family.

It catalyses the reaction nicotinate beta-D-ribonucleotide + ATP + H(+) = deamido-NAD(+) + diphosphate. The protein operates within cofactor biosynthesis; NAD(+) biosynthesis; deamido-NAD(+) from nicotinate D-ribonucleotide: step 1/1. Functionally, catalyzes the reversible adenylation of nicotinate mononucleotide (NaMN) to nicotinic acid adenine dinucleotide (NaAD). This Clostridium perfringens (strain SM101 / Type A) protein is Probable nicotinate-nucleotide adenylyltransferase.